Consider the following 286-residue polypeptide: Formamidopyrimidine-DNA glycosylase (286 aa).

The active-site Schiff-base intermediate with DNA is the P2. E3 serves as the catalytic Proton donor. The active-site Proton donor; for beta-elimination activity is K61. H96, R117, and K160 together coordinate DNA. The FPG-type zinc-finger motif lies at D246–R280. R270 serves as the catalytic Proton donor; for delta-elimination activity.

It belongs to the FPG family. In terms of assembly, monomer. The cofactor is Zn(2+).

It carries out the reaction Hydrolysis of DNA containing ring-opened 7-methylguanine residues, releasing 2,6-diamino-4-hydroxy-5-(N-methyl)formamidopyrimidine.. The catalysed reaction is 2'-deoxyribonucleotide-(2'-deoxyribose 5'-phosphate)-2'-deoxyribonucleotide-DNA = a 3'-end 2'-deoxyribonucleotide-(2,3-dehydro-2,3-deoxyribose 5'-phosphate)-DNA + a 5'-end 5'-phospho-2'-deoxyribonucleoside-DNA + H(+). Its function is as follows. Involved in base excision repair of DNA damaged by oxidation or by mutagenic agents. Acts as a DNA glycosylase that recognizes and removes damaged bases. Has a preference for oxidized purines, such as 7,8-dihydro-8-oxoguanine (8-oxoG). Has AP (apurinic/apyrimidinic) lyase activity and introduces nicks in the DNA strand. Cleaves the DNA backbone by beta-delta elimination to generate a single-strand break at the site of the removed base with both 3'- and 5'-phosphates. This Streptomyces avermitilis (strain ATCC 31267 / DSM 46492 / JCM 5070 / NBRC 14893 / NCIMB 12804 / NRRL 8165 / MA-4680) protein is Formamidopyrimidine-DNA glycosylase.